We begin with the raw amino-acid sequence, 144 residues long: Phospholipase A2 (144 aa).

A signal peptide spans 1–15 (MKFLVLAALLTAGTA). A propeptide spans 16 to 22 (ASGVSPT) (activation peptide). 7 disulfides stabilise this stretch: Cys-33–Cys-99, Cys-49–Cys-144, Cys-51–Cys-67, Cys-66–Cys-127, Cys-73–Cys-120, Cys-83–Cys-113, and Cys-106–Cys-118. Ca(2+) contacts are provided by Tyr-50, Gly-52, and Gly-54. His-70 is a catalytic residue. Asp-71 is a Ca(2+) binding site. Residue Asp-121 is part of the active site.

The protein belongs to the phospholipase A2 family. As to quaternary structure, monomer or homodimer. It depends on Ca(2+) as a cofactor. In terms of processing, activated by trypsin cleavage in the duodenum. Can also be activated by thrombin or autocatalytically.

The protein localises to the secreted. It carries out the reaction a 1,2-diacyl-sn-glycero-3-phosphocholine + H2O = a 1-acyl-sn-glycero-3-phosphocholine + a fatty acid + H(+). It catalyses the reaction 1,2-ditetradecanoyl-sn-glycero-3-phosphocholine + H2O = 1-tetradecanoyl-sn-glycero-3-phosphocholine + tetradecanoate + H(+). The enzyme catalyses 1,2-dihexadecanoyl-sn-glycero-3-phosphocholine + H2O = 1-hexadecanoyl-sn-glycero-3-phosphocholine + hexadecanoate + H(+). The catalysed reaction is 1-hexadecanoyl-2-(9Z-octadecenoyl)-sn-glycero-3-phosphocholine + H2O = 1-hexadecanoyl-sn-glycero-3-phosphocholine + (9Z)-octadecenoate + H(+). It carries out the reaction 1-hexadecanoyl-2-(5Z,8Z,11Z,14Z-eicosatetraenoyl)-sn-glycero-3-phosphocholine + H2O = 1-hexadecanoyl-sn-glycero-3-phosphocholine + (5Z,8Z,11Z,14Z)-eicosatetraenoate + H(+). It catalyses the reaction 1-hexadecanoyl-2-(9Z-octadecenoyl)-sn-glycero-3-phospho-(1'-sn-glycerol) + H2O = 1-hexadecanoyl-sn-glycero-3-phospho-(1'-sn-glycerol) + (9Z)-octadecenoate + H(+). The enzyme catalyses N-hexadecanoyl-1,2-di-(9Z-octadecenoyl)-sn-glycero-3-phosphoethanolamine + H2O = N-hexadecanoyl-1-(9Z-octadecenoyl)-sn-glycero-3-phosphoethanolamine + (9Z)-octadecenoate + H(+). The catalysed reaction is 1-hexadecanoyl-2-(9Z,12Z-octadecadienoyl)-sn-glycero-3-phosphoethanolamine + H2O = 1-hexadecanoyl-sn-glycero-3-phosphoethanolamine + (9Z,12Z)-octadecadienoate + H(+). It carries out the reaction N,1-dihexadecanoyl-2-(9Z,12Z-octadecadienoyl)-sn-glycero-3-phosphoethanolamine + H2O = N,1-dihexadecanoyl-sn-glycero-3-phosphoethanolamine + (9Z,12Z)-octadecadienoate + H(+). Its function is as follows. Secretory calcium-dependent phospholipase A2 that primarily targets dietary phospholipids in the intestinal tract. Hydrolyzes the ester bond of the fatty acyl group attached at sn-2 position of phospholipids (phospholipase A2 activity) with preference for phosphatidylethanolamines and phosphatidylglycerols over phosphatidylcholines. May play a role in the biosynthesis of N-acyl ethanolamines that regulate energy metabolism and inflammation in the intestinal tract. Hydrolyzes N-acyl phosphatidylethanolamines to N-acyl lysophosphatidylethanolamines, which are further cleaved by a lysophospholipase D to release N-acyl ethanolamines. May act in an autocrine and paracrine manner. Has anti-helminth activity in a process regulated by gut microbiota. Upon helminth infection of intestinal epithelia, directly affects phosphatidylethanolamine contents in the membrane of helminth larvae, likely controlling an array of phospholipid-mediated cellular processes such as membrane fusion and cell division while providing for better immune recognition, ultimately reducing larvae integrity and infectivity. This Oryctolagus cuniculus (Rabbit) protein is Phospholipase A2 (PLA2G1B).